A 93-amino-acid chain; its full sequence is Microcin N immunity protein (93 aa).

3 helical membrane passes run 3-23, 36-56, and 68-88; these read FLNF…FIVW, LSII…NYKI, and LFCF…YFIL.

Belongs to the MceB microcin immunity protein family.

The protein resides in the cell inner membrane. Functionally, probably able to protect the producing cell against microcin N (microcin 24). This Escherichia coli protein is Microcin N immunity protein.